A 343-amino-acid chain; its full sequence is DNA repair and recombination protein RadA (343 aa).

107 to 114 serves as a coordination point for ATP; that stretch reads GEFGAGKS.

It belongs to the eukaryotic RecA-like protein family.

Its function is as follows. Involved in DNA repair and in homologous recombination. Binds and assemble on single-stranded DNA to form a nucleoprotein filament. Hydrolyzes ATP in a ssDNA-dependent manner and promotes DNA strand exchange between homologous DNA molecules. This chain is DNA repair and recombination protein RadA, found in Haloquadratum walsbyi (strain DSM 16790 / HBSQ001).